The primary structure comprises 116 residues: Ribonuclease P protein component (116 aa).

Belongs to the RnpA family. Consists of a catalytic RNA component (M1 or rnpB) and a protein subunit.

It catalyses the reaction Endonucleolytic cleavage of RNA, removing 5'-extranucleotides from tRNA precursor.. Its function is as follows. RNaseP catalyzes the removal of the 5'-leader sequence from pre-tRNA to produce the mature 5'-terminus. It can also cleave other RNA substrates such as 4.5S RNA. The protein component plays an auxiliary but essential role in vivo by binding to the 5'-leader sequence and broadening the substrate specificity of the ribozyme. This is Ribonuclease P protein component from Picosynechococcus sp. (strain ATCC 27264 / PCC 7002 / PR-6) (Agmenellum quadruplicatum).